The following is a 1150-amino-acid chain: BAI1-associated protein 3 (1150 aa).

The segment at 22-44 (RRKTEQEPEVTNSQEPPTGAWKP) is disordered. The C2 1 domain maps to 139 to 298 (SSEEHMEAIM…VKSARANGTA (160 aa)). Ca(2+) contacts are provided by D174 and D180. Residues 193–214 (APQEPSGQKEQRFGFRKGSKRS) form a disordered region. Ca(2+) contacts are provided by D258 and D260. The MHD1 domain occupies 626-747 (FELYLTLADT…EASLFYTELL (122 aa)). In terms of domain architecture, MHD2 spans 851–959 (DEAVAPLLKY…CSTRECIEQF (109 aa)). Residues 973 to 1099 (RFGRLTVRCH…GIARPHVGGG (127 aa)) enclose the C2 2 domain. The Ca(2+) site is built by L1003, D1004, D1010, D1068, D1070, S1073, and D1076.

The protein belongs to the unc-13 family. Interacts with ADGRB1, this interaction is direct. Interacts with endosomal SNARE proteins VAMP3, VAMP4, STX6 and STX16; this interaction is increased in the presence of calcium. Ca(2+) is required as a cofactor. As to expression, prominently expressed in brain structures including hypothalamus, amygdala, stria terminalis and periaqueductal gray (at protein level). Expressed in nonneuronal tissues, including placenta, lung, pancreas, spleen, and testes. Within placenta, expression is restricted to the syncytiotrophoblasts.

The protein resides in the cytoplasm. It localises to the cytosol. It is found in the recycling endosome membrane. The protein localises to the late endosome membrane. Its subcellular location is the golgi apparatus. The protein resides in the trans-Golgi network membrane. It localises to the cell membrane. In terms of biological role, functions in endosome to Golgi retrograde transport. In response to calcium influx, may interact with SNARE fusion receptors and membrane phospholipids to mediate endosome fusion with the trans-Golgi network. By promoting the recycling of secretory vesicle transmembrane proteins, it indirectly controls dense-core secretory vesicle biogenesis, maturation and their ability to mediate the constitutive and regulated secretion of neurotransmitters and hormones. May regulate behavior and food intake by controlling calcium-stimulated exocytosis of neurotransmitters including NPY and serotonin and hormones like insulin. Proposed to play a role in hypothalamic neuronal firing by modulating gamma-aminobutyric acid (GABA)ergic inhibitory neurotransmission. The sequence is that of BAI1-associated protein 3 from Mus musculus (Mouse).